The chain runs to 396 residues: Acetyl-CoA acetyltransferase (396 aa).

Residue C89 is the Acyl-thioester intermediate of the active site. CoA is bound by residues 223–225 (RKS) and S249. Catalysis depends on proton acceptor residues H352 and C382.

The protein belongs to the thiolase-like superfamily. Thiolase family.

It localises to the cytoplasm. It carries out the reaction 2 acetyl-CoA = acetoacetyl-CoA + CoA. It functions in the pathway lipid metabolism; butanoate metabolism. Its function is as follows. Involved in syntrophic growth of S.wolfei with butyrate, as part of the butyrate oxidation pathway. Probably catalyzes the beta-keto thiolysis of acetoacetyl-CoA, leading to 2 acetyl-CoA molecules. This is Acetyl-CoA acetyltransferase from Syntrophomonas wolfei subsp. wolfei (strain DSM 2245B / Goettingen).